Consider the following 295-residue polypeptide: Small ribosomal subunit protein uS2 (295 aa).

The disordered stretch occupies residues 260-295 (KQAKKFSKTKNIDEETNTEFEQALNDADENKNSDNA).

It belongs to the universal ribosomal protein uS2 family.

This chain is Small ribosomal subunit protein uS2, found in Rickettsia felis (strain ATCC VR-1525 / URRWXCal2) (Rickettsia azadi).